A 60-amino-acid chain; its full sequence is L-amino-acid oxidase (60 aa).

1–4 provides a ligand contact to FAD; sequence GPMR. Position 4 (Arg4) interacts with substrate.

This sequence belongs to the flavin monoamine oxidase family. FIG1 subfamily. Homodimer; non-covalently linked. The cofactor is FAD. Post-translationally, contains 2 disulfide bonds. In terms of processing, N-glycosylated. As to expression, expressed by the venom gland.

The protein localises to the secreted. It catalyses the reaction an L-alpha-amino acid + O2 + H2O = a 2-oxocarboxylate + H2O2 + NH4(+). In terms of biological role, catalyzes an oxidative deamination of predominantly hydrophobic and aromatic L-amino acids, thus producing hydrogen peroxide that may contribute to the diverse toxic effects of this enzyme. Exhibits diverse biological activities, such as hemorrhage, hemolysis, edema, apoptosis of vascular endothelial cells or tumor cell lines, antibacterial and antiparasitic activities, as well as regulation of platelet aggregation. Effects of snake L-amino oxidases on platelets are controversial, since they either induce aggregation or inhibit agonist-induced aggregation. These different effects are probably due to different experimental conditions. The protein is L-amino-acid oxidase of Bitis gabonica (Gaboon adder).